We begin with the raw amino-acid sequence, 68 residues long: Neuronal regeneration-related protein (68 aa).

The disordered stretch occupies residues 21–54 (MEGRLPKGRLPVPKEVNRKKNDETNAASLTPLGS). Over residues 44–54 (TNAASLTPLGS) the composition is skewed to polar residues.

As to quaternary structure, interacts with the latency-associated peptides (LAP) of TGFB1 and TGFB2; the interaction results in a decrease in TGFB autoinduction. Interacts with FLNA. Phosphorylated on Ser-59. Phosphorylation decreases stability and activity.

Its subcellular location is the cytoplasm. In terms of biological role, may have roles in neural function and cellular differentiation. Ectopic expression promotes axonal regeneration, induces differentiation of fibroblast into myofibroblast, induces myofibroblast ameboid migration, augments motility of gliomas, and increases retinoic-acid regulation of lipid-droplet biogenesis. Down-regulates the expression of TGFB1 and TGFB2 but not of TGFB3. May play a role in the regulation of alveolar generation. This is Neuronal regeneration-related protein (NREP) from Pongo abelii (Sumatran orangutan).